Reading from the N-terminus, the 336-residue chain is DNA polymerase beta (336 aa).

K59, L61, and V64 together coordinate K(+). Residues K59, L61, and V64 each coordinate Na(+). Residue K71 is the Nucleophile; Schiff-base intermediate with DNA; for 5'-dRP lyase activity of the active site. R82 carries the omega-N-methylarginine; by PRMT6 modification. K(+) is bound by residues T100, V102, and I105. Na(+)-binding residues include T100, V102, and I105. R148 contributes to the a 2'-deoxyribonucleoside 5'-triphosphate binding site. An Omega-N-methylarginine; by PRMT6 modification is found at R151. A 2'-deoxyribonucleoside 5'-triphosphate contacts are provided by S179, R182, G188, and D189. The tract at residues 182 to 191 is DNA-binding; the sequence is RGAESSGDID. Mg(2+) contacts are provided by D189, D191, and D257.

Belongs to the DNA polymerase type-X family. Mg(2+) serves as cofactor. In terms of processing, methylation by PRMT6 stimulates the polymerase activity by enhancing DNA binding and processivity. Post-translationally, ubiquitinated: monoubiquitinated by huwe1/arf-bp1. Monoubiquitinated protein is then the target of stub1/chip, which catalyzes polyubiquitination from monoubiquitin, leading to degradation by the proteasome. usp47 mediates the deubiquitination of monoubiquitinated protein, preventing polyubiquitination by STUB1/CHIP and its subsequent degradation.

The protein localises to the nucleus. Its subcellular location is the cytoplasm. It carries out the reaction DNA(n) + a 2'-deoxyribonucleoside 5'-triphosphate = DNA(n+1) + diphosphate. It catalyses the reaction a 5'-end 2'-deoxyribose-2'-deoxyribonucleotide-DNA = (2E,4S)-4-hydroxypenten-2-al-5-phosphate + a 5'-end 5'-phospho-2'-deoxyribonucleoside-DNA + H(+). The enzyme catalyses 2'-deoxyribonucleotide-(2'-deoxyribose 5'-phosphate)-2'-deoxyribonucleotide-DNA = a 3'-end 2'-deoxyribonucleotide-(2,3-dehydro-2,3-deoxyribose 5'-phosphate)-DNA + a 5'-end 5'-phospho-2'-deoxyribonucleoside-DNA + H(+). Repair polymerase that plays a key role in base-excision repair. During this process, the damaged base is excised by specific DNA glycosylases, the DNA backbone is nicked at the abasic site by an apurinic/apyrimidic (AP) endonuclease, and POLB removes 5'-deoxyribose-phosphate from the preincised AP site acting as a 5'-deoxyribose-phosphate lyase (5'-dRP lyase); through its DNA polymerase activity, it adds one nucleotide to the 3' end of the arising single-nucleotide gap. Conducts 'gap-filling' DNA synthesis in a stepwise distributive fashion rather than in a processive fashion as for other DNA polymerases. It is also able to cleave sugar-phosphate bonds 3' to an intact AP site, acting as an AP lyase. The chain is DNA polymerase beta (polb) from Danio rerio (Zebrafish).